A 347-amino-acid chain; its full sequence is Phenylalanine--tRNA ligase alpha subunit (347 aa).

Mg(2+) is bound at residue E261.

The protein belongs to the class-II aminoacyl-tRNA synthetase family. Phe-tRNA synthetase alpha subunit type 1 subfamily. Tetramer of two alpha and two beta subunits. The cofactor is Mg(2+).

It is found in the cytoplasm. The enzyme catalyses tRNA(Phe) + L-phenylalanine + ATP = L-phenylalanyl-tRNA(Phe) + AMP + diphosphate + H(+). This Streptococcus equi subsp. equi (strain 4047) protein is Phenylalanine--tRNA ligase alpha subunit.